We begin with the raw amino-acid sequence, 185 residues long: UPF0397 protein PAM_019 (185 aa).

The next 5 helical transmembrane spans lie at 13 to 33 (IGLS…PVGF), 42 to 62 (AFLA…VGLI), 69 to 89 (FILF…IGFI), 109 to 129 (IVYF…FFAP), and 143 to 163 (VYLQ…VVGI).

This sequence belongs to the UPF0397 family.

The protein resides in the cell membrane. This Onion yellows phytoplasma (strain OY-M) protein is UPF0397 protein PAM_019.